Reading from the N-terminus, the 148-residue chain is WAP four-disulfide core domain protein 12 (148 aa).

The first 23 residues, 1–23 (MRSYSFWFLTAFLVFATLALGEA), serve as a signal peptide directing secretion. The region spanning 27–74 (GKEKWGNCPAEKGSCIKSGPSQCHADNDCPGDKKCCFLSCSFKCVSPD) is the WAP domain. Disulfide bonds link Cys34/Cys62, Cys41/Cys66, Cys49/Cys61, and Cys55/Cys70. A disordered region spans residues 74 to 148 (DRIRKEGGNE…QEASPQKEWS (75 aa)).

Its subcellular location is the secreted. In terms of biological role, antibacterial protein. Putative acid-stable proteinase inhibitor. This chain is WAP four-disulfide core domain protein 12 (WFDC12), found in Lemur catta (Ring-tailed lemur).